The sequence spans 588 residues: Proteasome-associated ATPase (588 aa).

Basic and acidic residues predominate over residues 1–10; the sequence is MAAHDDDMNR. The segment at 1–23 is disordered; sequence MAAHDDDMNRGIRPGRGSEDPAG. A coiled-coil region spans residues 47-94; sequence RILEERIVELQTNLAGVSAQNERLAGTLREARDQIVALKEEVDRLAQP. An ATP-binding site is contributed by 276–281; sequence GCGKTL. Residues 587–588 are docks into pockets in the proteasome alpha-ring; it reads YL.

The protein belongs to the AAA ATPase family. As to quaternary structure, homohexamer. Assembles into a hexameric ring structure that caps the 20S proteasome core. Strongly interacts with the prokaryotic ubiquitin-like protein Pup through a hydrophobic interface; the interacting region of ARC lies in its N-terminal coiled-coil domain. There is one Pup binding site per ARC hexamer ring. Upon ATP-binding, the C-terminus of ARC interacts with the alpha-rings of the proteasome core, possibly by binding to the intersubunit pockets.

It functions in the pathway protein degradation; proteasomal Pup-dependent pathway. ATPase which is responsible for recognizing, binding, unfolding and translocation of pupylated proteins into the bacterial 20S proteasome core particle. May be essential for opening the gate of the 20S proteasome via an interaction with its C-terminus, thereby allowing substrate entry and access to the site of proteolysis. Thus, the C-termini of the proteasomal ATPase may function like a 'key in a lock' to induce gate opening and therefore regulate proteolysis. This Streptomyces coelicolor (strain ATCC BAA-471 / A3(2) / M145) protein is Proteasome-associated ATPase.